The primary structure comprises 211 residues: tRNA (guanine-N(7)-)-methyltransferase (211 aa).

Residues Glu-44, Asp-69, Asp-96, and Asp-118 each coordinate S-adenosyl-L-methionine. Residue Asp-118 is part of the active site. Residue Lys-122 participates in substrate binding. The segment at 124 to 129 (KHEKRR) is interaction with RNA. Substrate is bound by residues Asp-154 and 191–194 (TEYE).

This sequence belongs to the class I-like SAM-binding methyltransferase superfamily. TrmB family.

It carries out the reaction guanosine(46) in tRNA + S-adenosyl-L-methionine = N(7)-methylguanosine(46) in tRNA + S-adenosyl-L-homocysteine. It functions in the pathway tRNA modification; N(7)-methylguanine-tRNA biosynthesis. In terms of biological role, catalyzes the formation of N(7)-methylguanine at position 46 (m7G46) in tRNA. This Streptococcus pyogenes serotype M12 (strain MGAS2096) protein is tRNA (guanine-N(7)-)-methyltransferase.